We begin with the raw amino-acid sequence, 160 residues long: Crossover junction endodeoxyribonuclease RuvC (160 aa).

Residues D7, E70, and D142 contribute to the active site. Mg(2+) contacts are provided by D7, E70, and D142.

Belongs to the RuvC family. As to quaternary structure, homodimer which binds Holliday junction (HJ) DNA. The HJ becomes 2-fold symmetrical on binding to RuvC with unstacked arms; it has a different conformation from HJ DNA in complex with RuvA. In the full resolvosome a probable DNA-RuvA(4)-RuvB(12)-RuvC(2) complex forms which resolves the HJ. Requires Mg(2+) as cofactor.

The protein resides in the cytoplasm. It catalyses the reaction Endonucleolytic cleavage at a junction such as a reciprocal single-stranded crossover between two homologous DNA duplexes (Holliday junction).. In terms of biological role, the RuvA-RuvB-RuvC complex processes Holliday junction (HJ) DNA during genetic recombination and DNA repair. Endonuclease that resolves HJ intermediates. Cleaves cruciform DNA by making single-stranded nicks across the HJ at symmetrical positions within the homologous arms, yielding a 5'-phosphate and a 3'-hydroxyl group; requires a central core of homology in the junction. The consensus cleavage sequence is 5'-(A/T)TT(C/G)-3'. Cleavage occurs on the 3'-side of the TT dinucleotide at the point of strand exchange. HJ branch migration catalyzed by RuvA-RuvB allows RuvC to scan DNA until it finds its consensus sequence, where it cleaves and resolves the cruciform DNA. The chain is Crossover junction endodeoxyribonuclease RuvC from Ehrlichia ruminantium (strain Welgevonden).